A 207-amino-acid chain; its full sequence is Proteasome subunit beta (207 aa).

The propeptide at 1–9 (MSNKNTFEG) is removed in mature form; by autocatalysis. The active-site Nucleophile is T10.

Belongs to the peptidase T1B family. As to quaternary structure, the 20S proteasome core is composed of 14 alpha and 14 beta subunits that assemble into four stacked heptameric rings, resulting in a barrel-shaped structure. The two inner rings, each composed of seven catalytic beta subunits, are sandwiched by two outer rings, each composed of seven alpha subunits. The catalytic chamber with the active sites is on the inside of the barrel. Has a gated structure, the ends of the cylinder being occluded by the N-termini of the alpha-subunits. Is capped at one or both ends by the proteasome regulatory ATPase, PAN.

Its subcellular location is the cytoplasm. It catalyses the reaction Cleavage of peptide bonds with very broad specificity.. The formation of the proteasomal ATPase PAN-20S proteasome complex, via the docking of the C-termini of PAN into the intersubunit pockets in the alpha-rings, triggers opening of the gate for substrate entry. Interconversion between the open-gate and close-gate conformations leads to a dynamic regulation of the 20S proteasome proteolysis activity. Functionally, component of the proteasome core, a large protease complex with broad specificity involved in protein degradation. The protein is Proteasome subunit beta of Methanobrevibacter ruminantium (strain ATCC 35063 / DSM 1093 / JCM 13430 / OCM 146 / M1) (Methanobacterium ruminantium).